The chain runs to 268 residues: Ubiquinone biosynthesis protein COQ4 homolog, mitochondrial (268 aa).

Zn(2+)-binding residues include His171, Asp172, His175, and Glu187.

The protein belongs to the COQ4 family. Component of a multi-subunit COQ enzyme complex. Zn(2+) is required as a cofactor.

The protein localises to the mitochondrion inner membrane. It carries out the reaction a 4-hydroxy-3-methoxy-5-(all-trans-polyprenyl)benzoate + H(+) = a 2-methoxy-6-(all-trans-polyprenyl)phenol + CO2. It functions in the pathway cofactor biosynthesis; ubiquinone biosynthesis. Functionally, lyase that catalyzes the C1-decarboxylation of 4-hydroxy-3-methoxy-5-(all-trans-polyprenyl)benzoic acid into 2-methoxy-6-(all-trans-polyprenyl)phenol during ubiquinone biosynthesis. The protein is Ubiquinone biosynthesis protein COQ4 homolog, mitochondrial of Drosophila melanogaster (Fruit fly).